Consider the following 509-residue polypeptide: Solute carrier family 2, facilitated glucose transporter member 4 (509 aa).

Over 1-24 the chain is Cytoplasmic; sequence MPSGFQQIGSEDGEPPQQRVTGTL. Residues 7–13 form an interaction with SRFBP1 region; the sequence is QIGSEDG. The residue at position 10 (serine 10) is a Phosphoserine. A helical transmembrane segment spans residues 25–45; sequence VLAVFSAVLGSLQFGYNIGVI. Topologically, residues 46 to 81 are extracellular; that stretch reads NAPQKVIEQSYNETWLGRQGPEGPSSIPPGTLTTLW. Asparagine 57 is a glycosylation site (N-linked (GlcNAc...) asparagine). The helical transmembrane segment at 82–102 threads the bilayer; that stretch reads ALSVAIFSVGGMISSFLIGII. Residues 103–111 lie on the Cytoplasmic side of the membrane; the sequence is SQWLGRKRA. A helical membrane pass occupies residues 112-132; sequence MLVNNVLAVLGGSLMGLANAA. Residues 133–142 lie on the Extracellular side of the membrane; the sequence is ASYEMLILGR. Residues 143–163 form a helical membrane-spanning segment; the sequence is FLIGAYSGLTSGLVPMYVGEI. The Cytoplasmic segment spans residues 164–171; it reads APTHLRGA. Residues 172 to 192 form a helical membrane-spanning segment; it reads LGTLNQLAIVIGILIAQVLGL. A D-glucose-binding site is contributed by glutamine 177. Residues 193 to 201 lie on the Extracellular side of the membrane; that stretch reads ESLLGTASL. Residues 202–222 traverse the membrane as a helical segment; the sequence is WPLLLGLTVLPALLQLVLLPF. The S-palmitoyl cysteine moiety is linked to residue cysteine 223. Residues 223-287 lie on the Cytoplasmic side of the membrane; the sequence is CPESPRYLYI…LLGSRTHRQP (65 aa). Phosphoserine; by SGK1 is present on serine 274. The chain crosses the membrane as a helical span at residues 288–308; it reads LIIAVVLQLSQQLSGINAVFY. D-glucose contacts are provided by residues 298–299 and asparagine 304; that span reads QQ. Residues 309-323 are Extracellular-facing; that stretch reads YSTSIFETAGVGQPA. The chain crosses the membrane as a helical span at residues 324–344; the sequence is YATIGAGVVNTVFTLVSVLLV. D-glucose is bound at residue asparagine 333. At 345-353 the chain is on the cytoplasmic side; it reads ERAGRRTLH. A helical transmembrane segment spans residues 354–374; sequence LLGLAGMCGCAILMTVALLLL. Residues 375-384 are Extracellular-facing; sequence ERVPAMSYVS. The helical transmembrane segment at 385–405 threads the bilayer; sequence IVAIFGFVAFFEIGPGPIPWF. Positions 396 and 404 each coordinate D-glucose. The Cytoplasmic portion of the chain corresponds to 406 to 417; sequence IVAELFSQGPRP. Residues 418 to 438 form a helical membrane-spanning segment; it reads AAMAVAGFSNWTSNFIIGMGF. Topologically, residues 439-445 are extracellular; sequence QYVAEAM. A helical membrane pass occupies residues 446–466; that stretch reads GPYVFLLFAVLLLGFFIFTFL. At 467 to 509 the chain is on the cytoplasmic side; that stretch reads RVPETRGRTFDQISAAFHRTPSLLEQEVKPSTELEYLGPDEND. Threonine 486 is modified (phosphothreonine). Serine 488 is modified (phosphoserine). The Dileucine internalization motif signature appears at 489-490; that stretch reads LL.

Belongs to the major facilitator superfamily. Sugar transporter (TC 2.A.1.1) family. Glucose transporter subfamily. Interacts with NDUFA9. Binds to DAXX. Interacts via its N-terminus with SRFBP1. Interacts with TRARG1; the interaction is required for proper SLC2A4 recycling after insulin stimulation. Sumoylated. Post-translationally, palmitoylated. Palmitoylation by ZDHHC7 controls the insulin-dependent translocation of GLUT4 to the plasma membrane. As to expression, skeletal and cardiac muscles; brown and white fat.

The protein resides in the cell membrane. It is found in the endomembrane system. It localises to the cytoplasm. The protein localises to the perinuclear region. It catalyses the reaction D-glucose(out) = D-glucose(in). In terms of biological role, insulin-regulated facilitative glucose transporter, which plays a key role in removal of glucose from circulation. Response to insulin is regulated by its intracellular localization: in the absence of insulin, it is efficiently retained intracellularly within storage compartments in muscle and fat cells. Upon insulin stimulation, translocates from these compartments to the cell surface where it transports glucose from the extracellular milieu into the cell. The sequence is that of Solute carrier family 2, facilitated glucose transporter member 4 from Homo sapiens (Human).